A 233-amino-acid polypeptide reads, in one-letter code: Transcriptional regulatory protein PrrA (233 aa).

Residues 9-123 (RVLVVDDDSD…ELVARVKALL (115 aa)) enclose the Response regulatory domain. Aspartate 58 is modified (4-aspartylphosphate). Residues 134–232 (SETIAVGPLE…VRGVGFVLRM (99 aa)) constitute a DNA-binding region (ompR/PhoB-type).

Phosphorylated by PrrB at Asp-58.

It is found in the cytoplasm. Its function is as follows. Member of the two-component regulatory system PrrB/PrrA that is involved specifically in early intracellular multiplication of Mycobacterium and is essential for its viability. Upon phosphorylation by PrrB, functions as a transcription regulator by direct binding to promoter regions of target genes to positively regulate their expression. Autoregulates its own expression. This chain is Transcriptional regulatory protein PrrA (prrA), found in Mycobacterium leprae (strain TN).